The primary structure comprises 798 residues: Probable DEAD-box ATP-dependent RNA helicase 48 (798 aa).

3 disordered regions span residues 76-100, 117-148, and 236-257; these read KMWG…MSPK, DFWN…NSPI, and FRKN…GKMI. The segment covering 132–148 has biased composition (low complexity); sequence GSRSGSDSIDSTSNSPI. The span at 242–252 shows a compositional bias: acidic residues; the sequence is STEEDSDEEGD. The short motif at 328–356 is the Q motif element; that stretch reads KRFDESCISPLTLKALSASGILKMTRVQD. The Helicase ATP-binding domain occupies 359-543; sequence LSECLDGKDA…QLVLKRDHSY (185 aa). 372-379 lines the ATP pocket; sequence AKTGTGKS. Positions 491–494 match the DEAD box motif; sequence DEAD. In terms of domain architecture, Helicase C-terminal spans 577–726; sequence LLKEHINNTP…SIVKHQVDQS (150 aa).

This sequence belongs to the DEAD box helicase family.

The catalysed reaction is ATP + H2O = ADP + phosphate + H(+). This Arabidopsis thaliana (Mouse-ear cress) protein is Probable DEAD-box ATP-dependent RNA helicase 48 (RH48).